Here is a 373-residue protein sequence, read N- to C-terminus: DNA replication and repair protein RecF (373 aa).

30 to 37 (GANGSGKT) serves as a coordination point for ATP.

This sequence belongs to the RecF family.

It localises to the cytoplasm. Its function is as follows. The RecF protein is involved in DNA metabolism; it is required for DNA replication and normal SOS inducibility. RecF binds preferentially to single-stranded, linear DNA. It also seems to bind ATP. This is DNA replication and repair protein RecF from Marinobacter nauticus (strain ATCC 700491 / DSM 11845 / VT8) (Marinobacter aquaeolei).